The primary structure comprises 1295 residues: DNA-directed RNA polymerase subunit beta' (1295 aa).

The Zn(2+) site is built by C60, C62, C75, and C78. Residues D516, D518, and D520 each contribute to the Mg(2+) site. C841, C914, C921, and C924 together coordinate Zn(2+).

This sequence belongs to the RNA polymerase beta' chain family. The RNAP catalytic core consists of 2 alpha, 1 beta, 1 beta' and 1 omega subunit. When a sigma factor is associated with the core the holoenzyme is formed, which can initiate transcription. Mg(2+) is required as a cofactor. The cofactor is Zn(2+).

The catalysed reaction is RNA(n) + a ribonucleoside 5'-triphosphate = RNA(n+1) + diphosphate. In terms of biological role, DNA-dependent RNA polymerase catalyzes the transcription of DNA into RNA using the four ribonucleoside triphosphates as substrates. This Dehalococcoides mccartyi (strain ATCC BAA-2100 / JCM 16839 / KCTC 5957 / BAV1) protein is DNA-directed RNA polymerase subunit beta'.